The chain runs to 320 residues: tRNA U34 carboxymethyltransferase (320 aa).

Carboxy-S-adenosyl-L-methionine contacts are provided by residues Lys-87, Trp-101, Lys-106, Gly-126, 148-150 (EPS), 176-177 (VE), Met-192, Tyr-196, and Arg-311.

Belongs to the class I-like SAM-binding methyltransferase superfamily. CmoB family. Homotetramer.

It catalyses the reaction carboxy-S-adenosyl-L-methionine + 5-hydroxyuridine(34) in tRNA = 5-carboxymethoxyuridine(34) in tRNA + S-adenosyl-L-homocysteine + H(+). Catalyzes carboxymethyl transfer from carboxy-S-adenosyl-L-methionine (Cx-SAM) to 5-hydroxyuridine (ho5U) to form 5-carboxymethoxyuridine (cmo5U) at position 34 in tRNAs. The sequence is that of tRNA U34 carboxymethyltransferase from Desulfotalea psychrophila (strain LSv54 / DSM 12343).